The chain runs to 141 residues: MVSEHISTQQVGPDALFSPLGWDLLALALYVALACIIVVSLLLAARFLGHRSRTPLKNLPYECGVEPTGPARPGYPVPFYLTAIFFVVFDVEVAFIASWAVAYDLLGWAGLAQIAFFIITLLVALIYLWRRGALDWGPQRR.

The next 3 membrane-spanning stretches (helical) occupy residues 24 to 44 (LLAL…LLLA), 77 to 97 (VPFY…AFIA), and 106 to 126 (LGWA…VALI).

It belongs to the complex I subunit 3 family. NDH-1 is composed of 14 different subunits. Subunits NuoA, H, J, K, L, M, N constitute the membrane sector of the complex.

The protein resides in the cell inner membrane. It carries out the reaction a quinone + NADH + 5 H(+)(in) = a quinol + NAD(+) + 4 H(+)(out). Functionally, NDH-1 shuttles electrons from NADH, via FMN and iron-sulfur (Fe-S) centers, to quinones in the respiratory chain. The immediate electron acceptor for the enzyme in this species is believed to be ubiquinone. Couples the redox reaction to proton translocation (for every two electrons transferred, four hydrogen ions are translocated across the cytoplasmic membrane), and thus conserves the redox energy in a proton gradient. The polypeptide is NADH-quinone oxidoreductase subunit A (Syntrophotalea carbinolica (strain DSM 2380 / NBRC 103641 / GraBd1) (Pelobacter carbinolicus)).